The primary structure comprises 183 residues: MEFKTYSDFFDKNANSIINWFEGELAKVRSGRANLKILDNVRAEYYGEQTPLIEMASLSIPEPREILIKPYEKSSVNLIQAALLKANLNLTPVVDGDKIRIKLPLLTEENRKENVKKVKAVGEKAKQEVRFIRRDTLNKIKSDKIADKDLNKYFEEQVDKITKKYIDQIDSILAKKEKDLLSL.

It belongs to the RRF family.

It localises to the cytoplasm. Its function is as follows. Responsible for the release of ribosomes from messenger RNA at the termination of protein biosynthesis. May increase the efficiency of translation by recycling ribosomes from one round of translation to another. This Mycoplasmoides gallisepticum (strain R(low / passage 15 / clone 2)) (Mycoplasma gallisepticum) protein is Ribosome-recycling factor.